Reading from the N-terminus, the 147-residue chain is 18 kDa antigen 1 (147 aa).

The 111-residue stretch at 21–131 folds into the sHSP domain; that stretch reads TPTRPAVMPM…RPRKIAVGAA (111 aa).

Belongs to the small heat shock protein (HSP20) family.

Its function is as follows. Not known. This protein is one of the major immune reactive proteins in mycobacteria. The chain is 18 kDa antigen 1 from Mycobacterium avium.